Reading from the N-terminus, the 329-residue chain is MPEGPSVRKFHHLVSPFVGQQVVKTGGSSKKLNPTSFQSLWLQDSQVHGKKLFLRFDPDEEAVSLGNSLLSEPLREGEQKDKARHHQEASDPSSWSPGGDSAVPSGDDGLQCLGGDTPAGGAERWLQVSFGLFGSIRVNEFSRAKKANKRGDWRDPVPRLVLHFSGSGFLAFYNCQMTWRFSSPVVSPASDILSEKFHRGQALEALGREQPICYTLLDQRYFSGLGNIIKNEALFRAGIHPLSPGSLLGLPRLEALVDHVVAFSADWLQGKFQGTRQHTQIYQKEQCPAGHQVVRESLGPPGGFQRLTWWCPQCQPRLSADEPKQLQPS.

P2 (schiff-base intermediate with DNA) is an active-site residue. The active-site Proton donor is the E3. K50 (proton donor; for beta-elimination activity) is an active-site residue. An N6-acetyllysine modification is found at K50. Phosphoserine is present on S68. Positions 68–116 are disordered; the sequence is SLLSEPLREGEQKDKARHHQEASDPSSWSPGGDSAVPSGDDGLQCLGGD. The span at 73–89 shows a compositional bias: basic and acidic residues; it reads PLREGEQKDKARHHQEA. Residues 90 to 102 show a composition bias toward low complexity; it reads SDPSSWSPGGDSA. K149 is modified (N6-acetyllysine). N227 contributes to the DNA binding site. The segment at 280–316 adopts an FPG-type zinc-finger fold; the sequence is QIYQKEQCPAGHQVVRESLGPPGGFQRLTWWCPQCQP. The active-site Proton donor; for delta-elimination activity is R306.

The protein belongs to the FPG family. As to quaternary structure, binds EP300.

It localises to the nucleus. It catalyses the reaction 2'-deoxyribonucleotide-(2'-deoxyribose 5'-phosphate)-2'-deoxyribonucleotide-DNA = a 3'-end 2'-deoxyribonucleotide-(2,3-dehydro-2,3-deoxyribose 5'-phosphate)-DNA + a 5'-end 5'-phospho-2'-deoxyribonucleoside-DNA + H(+). Acetylation of Lys-50 leads to loss of DNA nicking activity. In terms of biological role, involved in base excision repair of DNA damaged by oxidation or by mutagenic agents. Has DNA glycosylase activity towards 5-hydroxyuracil and other oxidized derivatives of cytosine with a preference for mismatched double-stranded DNA (DNA bubbles). Has low or no DNA glycosylase activity towards thymine glycol, 2-hydroxyadenine, hypoxanthine and 8-oxoguanine. Has AP (apurinic/apyrimidinic) lyase activity and introduces nicks in the DNA strand. Cleaves the DNA backbone by beta-delta elimination to generate a single-strand break at the site of the removed base with both 3'- and 5'-phosphates. The polypeptide is Endonuclease 8-like 2 (NEIL2) (Bos taurus (Bovine)).